Here is a 137-residue protein sequence, read N- to C-terminus: Nucleoside diphosphate kinase (137 aa).

K9, F57, R85, T91, R102, and N112 together coordinate ATP. Catalysis depends on H115, which acts as the Pros-phosphohistidine intermediate.

This sequence belongs to the NDK family. In terms of assembly, homotetramer. The cofactor is Mg(2+).

It localises to the cytoplasm. The enzyme catalyses a 2'-deoxyribonucleoside 5'-diphosphate + ATP = a 2'-deoxyribonucleoside 5'-triphosphate + ADP. It carries out the reaction a ribonucleoside 5'-diphosphate + ATP = a ribonucleoside 5'-triphosphate + ADP. Major role in the synthesis of nucleoside triphosphates other than ATP. The ATP gamma phosphate is transferred to the NDP beta phosphate via a ping-pong mechanism, using a phosphorylated active-site intermediate. In Helicobacter hepaticus (strain ATCC 51449 / 3B1), this protein is Nucleoside diphosphate kinase.